A 258-amino-acid polypeptide reads, in one-letter code: Tryptophan synthase alpha chain (258 aa).

Active-site proton acceptor residues include glutamate 44 and aspartate 55.

It belongs to the TrpA family. In terms of assembly, tetramer of two alpha and two beta chains.

The enzyme catalyses (1S,2R)-1-C-(indol-3-yl)glycerol 3-phosphate + L-serine = D-glyceraldehyde 3-phosphate + L-tryptophan + H2O. It functions in the pathway amino-acid biosynthesis; L-tryptophan biosynthesis; L-tryptophan from chorismate: step 5/5. The alpha subunit is responsible for the aldol cleavage of indoleglycerol phosphate to indole and glyceraldehyde 3-phosphate. This is Tryptophan synthase alpha chain from Petrotoga mobilis (strain DSM 10674 / SJ95).